The sequence spans 329 residues: Pantothenate kinase (329 aa).

The disordered stretch occupies residues 1–22 (MPAQGPSHGELPPADAGRESSP). ATP is bound at residue 107–114 (GSVAVGKS).

It belongs to the prokaryotic pantothenate kinase family.

It is found in the cytoplasm. The enzyme catalyses (R)-pantothenate + ATP = (R)-4'-phosphopantothenate + ADP + H(+). Its pathway is cofactor biosynthesis; coenzyme A biosynthesis; CoA from (R)-pantothenate: step 1/5. This Nocardioides sp. (strain ATCC BAA-499 / JS614) protein is Pantothenate kinase.